We begin with the raw amino-acid sequence, 444 residues long: C4-dicarboxylate transport protein (444 aa).

Transmembrane regions (helical) follow at residues 19 to 39 (HLYF…HFYP), 55 to 75 (LVKM…IAGM), 90 to 110 (IYFL…SNIL), 161 to 181 (ILQV…VGDL), 199 to 219 (LVAI…AFTI), 230 to 250 (LAFL…VVLG), 343 to 363 (LLLV…AGFI), and 366 to 386 (AATL…ILGI).

This sequence belongs to the dicarboxylate/amino acid:cation symporter (DAACS) (TC 2.A.23) family.

Its subcellular location is the cell inner membrane. Its function is as follows. Responsible for the transport of dicarboxylates such as succinate, fumarate, and malate from the periplasm across the membrane. This chain is C4-dicarboxylate transport protein, found in Allorhizobium ampelinum (strain ATCC BAA-846 / DSM 112012 / S4) (Agrobacterium vitis (strain S4)).